A 364-amino-acid polypeptide reads, in one-letter code: 3-dehydroquinate synthase (364 aa).

NAD(+)-binding positions include 105–109 (GVVGD), 129–130 (TT), Lys-142, and Lys-151. Zn(2+) contacts are provided by Glu-184, His-247, and His-264.

This sequence belongs to the sugar phosphate cyclases superfamily. Dehydroquinate synthase family. The cofactor is Co(2+). Zn(2+) serves as cofactor. Requires NAD(+) as cofactor.

The protein localises to the cytoplasm. The enzyme catalyses 7-phospho-2-dehydro-3-deoxy-D-arabino-heptonate = 3-dehydroquinate + phosphate. It participates in metabolic intermediate biosynthesis; chorismate biosynthesis; chorismate from D-erythrose 4-phosphate and phosphoenolpyruvate: step 2/7. In terms of biological role, catalyzes the conversion of 3-deoxy-D-arabino-heptulosonate 7-phosphate (DAHP) to dehydroquinate (DHQ). This chain is 3-dehydroquinate synthase, found in Acidithiobacillus ferrooxidans (strain ATCC 23270 / DSM 14882 / CIP 104768 / NCIMB 8455) (Ferrobacillus ferrooxidans (strain ATCC 23270)).